The primary structure comprises 193 residues: MGVDLTGVQKKKRVVRHHTYSTNPYIKLLIKLYKFLGKRTNSPFNKLIHKRLLKSRNNRAPISLSRIAVCMRRRTVWLKKGKKSPIAVIVGDVLDDVRMTRIPALRICALRFSKSARERITGAGGECLTFDQLAMMAPTGKNTMLLRGRKSGRESVKHFGAAGVPGSHAKPHVSSRGKERQRSSKRRHAFRHK.

The segment at 158–193 (HFGAAGVPGSHAKPHVSSRGKERQRSSKRRHAFRHK) is disordered. Over residues 183-193 (SSKRRHAFRHK) the composition is skewed to basic residues.

Belongs to the eukaryotic ribosomal protein eL18 family.

Its subcellular location is the cytoplasm. The polypeptide is Large ribosomal subunit protein eL18 (RPL18-A) (Trypanosoma brucei brucei (strain 927/4 GUTat10.1)).